We begin with the raw amino-acid sequence, 888 residues long: Alanine--tRNA ligase (888 aa).

4 residues coordinate Zn(2+): His564, His568, Cys676, and His680.

Belongs to the class-II aminoacyl-tRNA synthetase family. The cofactor is Zn(2+).

It is found in the cytoplasm. It carries out the reaction tRNA(Ala) + L-alanine + ATP = L-alanyl-tRNA(Ala) + AMP + diphosphate. Its function is as follows. Catalyzes the attachment of alanine to tRNA(Ala) in a two-step reaction: alanine is first activated by ATP to form Ala-AMP and then transferred to the acceptor end of tRNA(Ala). Also edits incorrectly charged Ser-tRNA(Ala) and Gly-tRNA(Ala) via its editing domain. The sequence is that of Alanine--tRNA ligase from Mesorhizobium japonicum (strain LMG 29417 / CECT 9101 / MAFF 303099) (Mesorhizobium loti (strain MAFF 303099)).